We begin with the raw amino-acid sequence, 421 residues long: uncharacterized protein (421 aa).

K249 carries the post-translational modification N6-(pyridoxal phosphate)lysine.

Belongs to the class-I pyridoxal-phosphate-dependent aminotransferase family. Pyridoxal 5'-phosphate is required as a cofactor.

It localises to the cytoplasm. This is an uncharacterized protein from Schizosaccharomyces pombe (strain 972 / ATCC 24843) (Fission yeast).